The sequence spans 310 residues: Apolipoprotein E (310 aa).

The signal sequence occupies residues Met1 to Ala18. Tandem repeats lie at residues Ala77–Gly98, Pro99–Gly120, Ala121–Gly142, Gln143–Leu164, Arg165–Glu186, Arg187–Thr208, Leu209–Arg226, and Gly227–Gln248. An 8 X 22 AA approximate tandem repeats region spans residues Ala77 to Gln248. The LDL and other lipoprotein receptors binding stretch occupies residues His155 to Arg165. Leu159–Arg162 serves as a coordination point for heparin. Residues His207 to Met283 form a lipid-binding and lipoprotein association region. Ala222 to Leu229 is a binding site for heparin. The segment at Asn259–Gln310 is homooligomerization. Residues Arg271–Met283 form a specificity for association with VLDL region.

The protein belongs to the apolipoprotein A1/A4/E family. In terms of assembly, homotetramer. May interact with ABCA1; functionally associated with ABCA1 in the biogenesis of HDLs. May interact with APP/A4 amyloid-beta peptide; the interaction is extremely stable in vitro but its physiological significance is unclear. May interact with MAPT. May interact with MAP2. In the cerebrospinal fluid, interacts with secreted SORL1. Interacts with PMEL; this allows the loading of PMEL luminal fragment on ILVs to induce fibril nucleation. Post-translationally, APOE exists as multiple glycosylated and sialylated glycoforms within cells and in plasma. The extent of glycosylation and sialylation are tissue and context specific. Glycated in plasma VLDL. In terms of processing, phosphorylated by FAM20C in the extracellular medium.

The protein localises to the secreted. Its subcellular location is the extracellular space. The protein resides in the extracellular matrix. It is found in the extracellular vesicle. It localises to the endosome. The protein localises to the multivesicular body. Functionally, APOE is an apolipoprotein, a protein associating with lipid particles, that mainly functions in lipoprotein-mediated lipid transport between organs via the plasma and interstitial fluids. APOE is a core component of plasma lipoproteins and is involved in their production, conversion and clearance. Apolipoproteins are amphipathic molecules that interact both with lipids of the lipoprotein particle core and the aqueous environment of the plasma. As such, APOE associates with chylomicrons, chylomicron remnants, very low density lipoproteins (VLDL) and intermediate density lipoproteins (IDL) but shows a preferential binding to high-density lipoproteins (HDL). It also binds a wide range of cellular receptors including the LDL receptor/LDLR and the very low-density lipoprotein receptor/VLDLR that mediate the cellular uptake of the APOE-containing lipoprotein particles. Finally, APOE also has a heparin-binding activity and binds heparan-sulfate proteoglycans on the surface of cells, a property that supports the capture and the receptor-mediated uptake of APOE-containing lipoproteins by cells. This is Apolipoprotein E (APOE) from Dicerorhinus sumatrensis harrissoni (Bornean rhinoceros).